The following is a 429-amino-acid chain: Ribosomal RNA small subunit methyltransferase B (429 aa).

S-adenosyl-L-methionine contacts are provided by residues 254–260, Asp277, Asp303, and Asp322; that span reads CAAPGGK. Cys375 acts as the Nucleophile in catalysis. The disordered stretch occupies residues 397–419; it reads ALSETGTPDQPGQQNLPGGEEGD. The segment covering 400–412 has biased composition (polar residues); it reads ETGTPDQPGQQNL.

The protein belongs to the class I-like SAM-binding methyltransferase superfamily. RsmB/NOP family.

Its subcellular location is the cytoplasm. The enzyme catalyses cytidine(967) in 16S rRNA + S-adenosyl-L-methionine = 5-methylcytidine(967) in 16S rRNA + S-adenosyl-L-homocysteine + H(+). Its function is as follows. Specifically methylates the cytosine at position 967 (m5C967) of 16S rRNA. The sequence is that of Ribosomal RNA small subunit methyltransferase B from Salmonella typhi.